The chain runs to 525 residues: Histidine-rich glycoprotein (525 aa).

The N-terminal stretch at 1–18 (MKVLTTALLLVTLQCSHA) is a signal peptide. Positions 19–122 (LSPTNCDASK…ESQDLSVNGY (104 aa)) constitute a Cystatin 1 domain. 5 cysteine pairs are disulfide-bonded: Cys24–Cys504, Cys78–Cys89, Cys103–Cys124, Cys201–Cys414, and Cys216–Cys239. The segment at 41-84 (GRRSGYTFQLLRVSDAHLDRVETATIYYLVLDVVESDCWVLSTK) is interaction with ATP5F1A. Residues Asn112 and Asn123 are each glycosylated (N-linked (GlcNAc...) asparagine). Residues 135 to 240 (NTKDSPVLVD…TPEYTDLICE (106 aa)) enclose the Cystatin 2 domain. Ser145 is modified (phosphoserine). Residue Asn200 is glycosylated (N-linked (GlcNAc...) asparagine). The segment at 275-445 (RDHHHTHKTH…GHSRKRGPGK (171 aa)) is disordered. N-linked (GlcNAc...) asparagine glycans are attached at residues Asn322 and Asn330. Composition is skewed to basic residues over residues 339-392 (HGQH…HGHH) and 426-443 (QYHRGHGPPHGHSRKRGP). Ser438 carries the post-translational modification Phosphoserine.

In terms of assembly, interacts with THBS1 (via the TSP type I repeats); the interaction blocks the antiangiogenic effect of THBS1 with CD36. Interacts with HPSE; the interaction is enhanced at acidic pH, partially inhibits binding of HPSE to cell surface receptors and modulates its enzymatic activity. Interacts (via the HRR domain) with TMP1; the interaction partially mediates the antiangiogenic properties of HRG. Interacts with kappa and lambda light chains of IgG molecules. Interacts with ATP5F1A; the interaction occurs on the surface of T-cells and alters their cell morphology in concert with CONA. Binds IgG molecules containing kappa and lambda light chains and inhibits the formation of insoluble immunoglobulin complexes. Interacts with F12; the interaction, which is enhanced in the presence of zinc ions and inhibited by heparin-binding to HRG, inhibits factor XII autoactivation and contact-initiated coagulation. Interacts with PLG (via its Kringle domains); the interaction tethers PLG to the cell surface and enhances its activation. Interacts (via the HRR domain) with TPM1; the interaction appears to contribute to the antiangiogenic properties of the HRR domain. Interacts with THBS2; the interaction blocks the antiangiogenic effect of THBS2 with CD36. N-glycosylated. In terms of processing, proteolytic cleavage produces several HRG fragments which are mostly disulfide-linked and, therefore, not released. Cleavage by plasmin is inhibited in the presence of heparin, zinc ions or in an acidic environment. Cleavage reduces binding of HRG to heparan sulfate, but enhances the ability of HRG to bind and tether plasminogen to the cell surface. On platelet activation, releases a 33 kDa antiangiogenic peptide which encompasses the HRR. Also cleaved in the C-terminal by plasmin. Expressed in liver, blood plasma, serum and in platelets. Also present in fibrin clots, wound fluid from acute wounds and chronic leg ulcers.

Its subcellular location is the secreted. In terms of biological role, plasma glycoprotein that binds a number of ligands such as heme, heparin, heparan sulfate, thrombospondin, plasminogen, and divalent metal ions. Inhibits rosette formation. Acts as an adapter protein and implicated in regulating many processes such as immune complex and pathogen clearance, cell adhesion, angiogenesis, coagulation and fibrinolysis. Mediates clearance of necrotic cells through enhancing the phagocytosis of necrotic cells in a heparan sulfate-dependent pathway. This process can be regulated by the presence of certain HRG ligands such as heparin and zinc ions. Binds to IgG subclasses of immunoglobins containing kappa and lambda light chains with different affinities regulating their clearance and inhibiting the formation of insoluble immune complexes. Tethers plasminogen to the cell surface. Binds T-cells and alters the cell morphology. Modulates angiogenesis by blocking the CD6-mediated antiangiongenic effect of thrombospondins, THBS1 and THBS2. The sequence is that of Histidine-rich glycoprotein (Hrg) from Rattus norvegicus (Rat).